Consider the following 148-residue polypeptide: UPF0756 membrane protein KPN78578_11500 (148 aa).

Transmembrane regions (helical) follow at residues 14–34 (ALGFISHNTTVAISILVLIIV), 51–71 (LTVGIIILTIGVMAPIASGTL), 86–106 (LLAIAVGVFVSWLGGRGVSLM), and 121–141 (VLGVALFRGVPVGPLIAAGII).

The protein belongs to the UPF0756 family.

The protein resides in the cell membrane. The polypeptide is UPF0756 membrane protein KPN78578_11500 (Klebsiella pneumoniae subsp. pneumoniae (strain ATCC 700721 / MGH 78578)).